Here is a 350-residue protein sequence, read N- to C-terminus: Heme A synthase (350 aa).

The next 8 membrane-spanning stretches (helical) occupy residues 16–36 (LARW…VGGI), 77–97 (FQLV…IFFW), 101–121 (HRLL…WFWI), 136–156 (LLAL…SGIV), 170–190 (LLVA…LVAL), 201–221 (GIGL…ALVA), 265–285 (VFLV…VLVV), and 299–321 (IVLH…SGVA). H272 is a binding site for heme. H328 contacts heme.

This sequence belongs to the COX15/CtaA family. Type 2 subfamily. Interacts with CtaB. Heme b serves as cofactor.

The protein resides in the cell membrane. The enzyme catalyses Fe(II)-heme o + 2 A + H2O = Fe(II)-heme a + 2 AH2. Its pathway is porphyrin-containing compound metabolism; heme A biosynthesis; heme A from heme O: step 1/1. Functionally, catalyzes the conversion of heme O to heme A by two successive hydroxylations of the methyl group at C8. The first hydroxylation forms heme I, the second hydroxylation results in an unstable dihydroxymethyl group, which spontaneously dehydrates, resulting in the formyl group of heme A. This chain is Heme A synthase, found in Novosphingobium aromaticivorans (strain ATCC 700278 / DSM 12444 / CCUG 56034 / CIP 105152 / NBRC 16084 / F199).